Here is a 261-residue protein sequence, read N- to C-terminus: Early 39 kDa protein (261 aa).

The tract at residues 215-261 is disordered; the sequence is SYVPTPVSNKKRRAPPSAPKKIAKQRRDTKPPPTYVSDNTQDTNMSE. The span at 250 to 261 shows a compositional bias: polar residues; the sequence is VSDNTQDTNMSE.

The sequence is that of Early 39 kDa protein from Orgyia pseudotsugata multicapsid polyhedrosis virus (OpMNPV).